Here is a 422-residue protein sequence, read N- to C-terminus: L-2-hydroxyglutarate dehydrogenase (422 aa).

The protein belongs to the L2HGDH family. FAD is required as a cofactor.

The protein resides in the cell inner membrane. It catalyses the reaction (S)-2-hydroxyglutarate + a quinone = a quinol + 2-oxoglutarate. Its pathway is amino-acid degradation. Catalyzes the dehydrogenation of L-2-hydroxyglutarate (L2HG) to alpha-ketoglutarate and couples to the respiratory chain by feeding electrons from the reaction into the membrane quinone pool. Functions in a L-lysine degradation pathway that proceeds via cadaverine, glutarate and L-2-hydroxyglutarate. Also displays some oxidase activity in vitro on L-2-hydroxyglutarate with O2 as the electron acceptor, but this activity is most likely not physiological. The polypeptide is L-2-hydroxyglutarate dehydrogenase (Escherichia coli O17:K52:H18 (strain UMN026 / ExPEC)).